The following is a 282-amino-acid chain: Large ribosomal subunit protein uL2 (282 aa).

A disordered region spans residues 230–282 (AMNPIDHPLGGGEGRSSGGRHPVSPWGMPAKGYKTRDKKKASSRLIVKRRGQK). The segment covering 265 to 282 (RDKKKASSRLIVKRRGQK) has biased composition (basic residues).

Belongs to the universal ribosomal protein uL2 family. Part of the 50S ribosomal subunit. Forms a bridge to the 30S subunit in the 70S ribosome.

In terms of biological role, one of the primary rRNA binding proteins. Required for association of the 30S and 50S subunits to form the 70S ribosome, for tRNA binding and peptide bond formation. It has been suggested to have peptidyltransferase activity; this is somewhat controversial. Makes several contacts with the 16S rRNA in the 70S ribosome. The polypeptide is Large ribosomal subunit protein uL2 (Desulfovibrio desulfuricans (strain ATCC 27774 / DSM 6949 / MB)).